A 397-amino-acid chain; its full sequence is 1-deoxy-D-xylulose 5-phosphate reductoisomerase (397 aa).

NADPH is bound by residues Thr10, Gly11, Ser12, Ile13, Gly36, Asn38, and Asn124. Lys125 is a 1-deoxy-D-xylulose 5-phosphate binding site. Residue Glu126 coordinates NADPH. Position 150 (Asp150) interacts with Mn(2+). The 1-deoxy-D-xylulose 5-phosphate site is built by Ser151, Glu152, Ser186, and His209. Glu152 contacts Mn(2+). Gly215 is an NADPH binding site. Ser222, Asn227, Lys228, and Glu231 together coordinate 1-deoxy-D-xylulose 5-phosphate. Residue Glu231 coordinates Mn(2+).

The protein belongs to the DXR family. The cofactor is Mg(2+). Requires Mn(2+) as cofactor.

The catalysed reaction is 2-C-methyl-D-erythritol 4-phosphate + NADP(+) = 1-deoxy-D-xylulose 5-phosphate + NADPH + H(+). The protein operates within isoprenoid biosynthesis; isopentenyl diphosphate biosynthesis via DXP pathway; isopentenyl diphosphate from 1-deoxy-D-xylulose 5-phosphate: step 1/6. Its function is as follows. Catalyzes the NADPH-dependent rearrangement and reduction of 1-deoxy-D-xylulose-5-phosphate (DXP) to 2-C-methyl-D-erythritol 4-phosphate (MEP). This chain is 1-deoxy-D-xylulose 5-phosphate reductoisomerase, found in Photobacterium profundum (strain SS9).